Consider the following 685-residue polypeptide: tRNA-dihydrouridine(47) synthase [NAD(P)(+)]-like (685 aa).

Residues 1 to 12 (MAATAAAAAAAP) show a composition bias toward low complexity. Disordered stretches follow at residues 1-91 (MAAT…SSSH), 209-234 (AAND…PLCN), and 257-314 (LIDN…SCRT). Residues 13 to 29 (PADPPDSSPAASSPPRP) show a composition bias toward pro residues. The C3H1-type zinc finger occupies 87–118 (KSSSHLCIEVGKSGNVSSCKYGDSCRFSHDID). 2 stretches are compositionally biased toward basic and acidic residues: residues 209 to 221 (AAND…HDNL) and 273 to 284 (SKVESDEIDKHG). Over residues 287–314 (TLNTNTESEDPNLSNGLEPSNNSSSCRT) the composition is skewed to polar residues. Residues 338–340 (PLT) and Gln392 contribute to the FMN site. Catalysis depends on Cys423, which acts as the Proton donor. FMN contacts are provided by residues Lys462, His492, 525–527 (NGD), and 550–551 (AR).

It belongs to the Dus family. Dus3 subfamily. The cofactor is FMN.

It carries out the reaction 5,6-dihydrouridine(47) in tRNA + NAD(+) = uridine(47) in tRNA + NADH + H(+). The enzyme catalyses 5,6-dihydrouridine(47) in tRNA + NADP(+) = uridine(47) in tRNA + NADPH + H(+). The catalysed reaction is a 5,6-dihydrouridine in mRNA + NAD(+) = a uridine in mRNA + NADH + H(+). It catalyses the reaction a 5,6-dihydrouridine in mRNA + NADP(+) = a uridine in mRNA + NADPH + H(+). Catalyzes the synthesis of dihydrouridine, a modified base found in the D-loop of most tRNAs. Specifically modifies U47 in cytoplasmic tRNAs. Catalyzes the synthesis of dihydrouridine in some mRNAs, thereby affecting their translation. The protein is tRNA-dihydrouridine(47) synthase [NAD(P)(+)]-like of Oryza sativa subsp. japonica (Rice).